The primary structure comprises 538 residues: Chaperonin GroEL (538 aa).

ATP is bound by residues 29–32, 86–90, Gly413, 476–478, and Asp492; these read TIGP, DGTTT, and NAA.

It belongs to the chaperonin (HSP60) family. Forms a cylinder of 14 subunits composed of two heptameric rings stacked back-to-back. Interacts with the co-chaperonin GroES.

It is found in the cytoplasm. It carries out the reaction ATP + H2O + a folded polypeptide = ADP + phosphate + an unfolded polypeptide.. Its function is as follows. Together with its co-chaperonin GroES, plays an essential role in assisting protein folding. The GroEL-GroES system forms a nano-cage that allows encapsulation of the non-native substrate proteins and provides a physical environment optimized to promote and accelerate protein folding. The protein is Chaperonin GroEL of Staphylococcus aureus (strain bovine RF122 / ET3-1).